The sequence spans 70 residues: Cytochrome c oxidase subunit 8B, mitochondrial (70 aa).

The N-terminal 24 residues, 1–24 (MPRLPPILRLLQAPAKFTVVPKAH), are a transit peptide targeting the mitochondrion. Residues 25 to 38 (VSAKPAKTPTSAVE) are Mitochondrial matrix-facing. The helical transmembrane segment at 39 to 60 (QAVGISAIVVGFMVPAGWVLAH) threads the bilayer. The Mitochondrial intermembrane portion of the chain corresponds to 61–70 (LESYKKSSAA).

This sequence belongs to the cytochrome c oxidase VIII family. As to quaternary structure, component of the cytochrome c oxidase (complex IV, CIV), a multisubunit enzyme composed of 14 subunits. The complex is composed of a catalytic core of 3 subunits MT-CO1, MT-CO2 and MT-CO3, encoded in the mitochondrial DNA, and 11 supernumerary subunits COX4I, COX5A, COX5B, COX6A, COX6B, COX6C, COX7A, COX7B, COX7C, COX8 and NDUFA4, which are encoded in the nuclear genome. The complex exists as a monomer or a dimer and forms supercomplexes (SCs) in the inner mitochondrial membrane with NADH-ubiquinone oxidoreductase (complex I, CI) and ubiquinol-cytochrome c oxidoreductase (cytochrome b-c1 complex, complex III, CIII), resulting in different assemblies (supercomplex SCI(1)III(2)IV(1) and megacomplex MCI(2)III(2)IV(2)).

Its subcellular location is the mitochondrion inner membrane. It participates in energy metabolism; oxidative phosphorylation. In terms of biological role, component of the cytochrome c oxidase, the last enzyme in the mitochondrial electron transport chain which drives oxidative phosphorylation. The respiratory chain contains 3 multisubunit complexes succinate dehydrogenase (complex II, CII), ubiquinol-cytochrome c oxidoreductase (cytochrome b-c1 complex, complex III, CIII) and cytochrome c oxidase (complex IV, CIV), that cooperate to transfer electrons derived from NADH and succinate to molecular oxygen, creating an electrochemical gradient over the inner membrane that drives transmembrane transport and the ATP synthase. Cytochrome c oxidase is the component of the respiratory chain that catalyzes the reduction of oxygen to water. Electrons originating from reduced cytochrome c in the intermembrane space (IMS) are transferred via the dinuclear copper A center (CU(A)) of subunit 2 and heme A of subunit 1 to the active site in subunit 1, a binuclear center (BNC) formed by heme A3 and copper B (CU(B)). The BNC reduces molecular oxygen to 2 water molecules using 4 electrons from cytochrome c in the IMS and 4 protons from the mitochondrial matrix. This is Cytochrome c oxidase subunit 8B, mitochondrial (Cox8b) from Mus musculus (Mouse).